A 309-amino-acid chain; its full sequence is Ribonuclease H2 subunit B (309 aa).

Residue A2 is modified to N-acetylalanine. K295 is modified (N6-acetyllysine). Position 296 is a phosphoserine (S296).

This sequence belongs to the RNase H2 subunit B family. As to quaternary structure, the RNase H2 complex is a heterotrimer composed of the catalytic subunit RNASEH2A and the non-catalytic subunits RNASEH2B and RNASEH2C.

Its subcellular location is the nucleus. Non catalytic subunit of RNase H2, an endonuclease that specifically degrades the RNA of RNA:DNA hybrids. Participates in DNA replication, possibly by mediating the removal of lagging-strand Okazaki fragment RNA primers during DNA replication. Mediates the excision of single ribonucleotides from DNA:RNA duplexes. The polypeptide is Ribonuclease H2 subunit B (RNASEH2B) (Bos taurus (Bovine)).